A 490-amino-acid chain; its full sequence is MTQGKKKKRAANRSIMLAKKIIIKDGGTPQGIGSPSVYHAVIVIFLEFFAWGLLTAPTLVVLHETFPKHTFLMNGLIQGVKGLLSFLSAPLIGALSDVWGRKSFLLLTVFFTCAPIPLMKISPWWYFAVISVSGVFAVTFSVVFAYVADITQEHERSMAYGLVSATFAASLVTSPAIGAYLGRVYGDSLVVVLATAIALLDICFILVAVPESLPEKMRPASWGAPISWEQADPFASLKKVGQDSIVLLICITVFLSYLPEAGQYSSFFLYLRQIMKFSPESVAAFIAVLGILSIIAQTIVLSLLMRSIGNKNTILLGLGFQILQLAWYGFGSEPWMMWAAGAVAAMSSITFPAVSALVSRTADADQQGVVQGMITGIRGLCNGLGPALYGFIFYIFHVELKELPITGTDLGTNTSPQHHFEQNSIIPGPPFLFGACSVLLALLVALFIPEHTNLSLRSSSWRKHCGSHSHPHNTQAPGEAKEPLLQDTNV.

Residue M1 is modified to N-acetylmethionine. Residues 1 to 40 lie on the Extracellular side of the membrane; it reads MTQGKKKKRAANRSIMLAKKIIIKDGGTPQGIGSPSVYHA. A glycan (N-linked (GlcNAc...) asparagine) is linked at N12. A helical transmembrane segment spans residues 41–61; it reads VIVIFLEFFAWGLLTAPTLVV. Residues 62–74 lie on the Cytoplasmic side of the membrane; it reads LHETFPKHTFLMN. The chain crosses the membrane as a helical span at residues 75–95; that stretch reads GLIQGVKGLLSFLSAPLIGAL. Residues 96 to 103 lie on the Extracellular side of the membrane; sequence SDVWGRKS. Residues 104–124 form a helical membrane-spanning segment; the sequence is FLLLTVFFTCAPIPLMKISPW. Over 125–126 the chain is Cytoplasmic; sequence WY. The helical transmembrane segment at 127-147 threads the bilayer; the sequence is FAVISVSGVFAVTFSVVFAYV. Topologically, residues 148-160 are extracellular; the sequence is ADITQEHERSMAY. The chain crosses the membrane as a helical span at residues 161 to 181; that stretch reads GLVSATFAASLVTSPAIGAYL. The Cytoplasmic portion of the chain corresponds to 182-188; that stretch reads GRVYGDS. A helical transmembrane segment spans residues 189 to 209; it reads LVVVLATAIALLDICFILVAV. Residues 210–243 lie on the Extracellular side of the membrane; sequence PESLPEKMRPASWGAPISWEQADPFASLKKVGQD. The helical transmembrane segment at 244–264 threads the bilayer; it reads SIVLLICITVFLSYLPEAGQY. Residues 265–284 are Cytoplasmic-facing; it reads SSFFLYLRQIMKFSPESVAA. A helical membrane pass occupies residues 285–305; the sequence is FIAVLGILSIIAQTIVLSLLM. The Extracellular segment spans residues 306 to 313; that stretch reads RSIGNKNT. A helical transmembrane segment spans residues 314-334; the sequence is ILLGLGFQILQLAWYGFGSEP. The Cytoplasmic portion of the chain corresponds to 335–337; it reads WMM. A helical membrane pass occupies residues 338 to 358; it reads WAAGAVAAMSSITFPAVSALV. Residues 359 to 379 lie on the Extracellular side of the membrane; it reads SRTADADQQGVVQGMITGIRG. Residues 380–400 form a helical membrane-spanning segment; it reads LCNGLGPALYGFIFYIFHVEL. Residues 401-427 lie on the Cytoplasmic side of the membrane; sequence KELPITGTDLGTNTSPQHHFEQNSIIP. Residues 428–448 traverse the membrane as a helical segment; it reads GPPFLFGACSVLLALLVALFI. The Extracellular segment spans residues 449–490; the sequence is PEHTNLSLRSSSWRKHCGSHSHPHNTQAPGEAKEPLLQDTNV. N453 is a glycosylation site (N-linked (GlcNAc...) asparagine). The segment at 465-490 is disordered; the sequence is CGSHSHPHNTQAPGEAKEPLLQDTNV.

Belongs to the major facilitator superfamily.

It is found in the membrane. The chain is Hippocampus abundant transcript 1 protein from Homo sapiens (Human).